The primary structure comprises 141 residues: Drosulfakinins (141 aa).

An N-terminal signal peptide occupies residues 1-33 (MGLRSCTHLATLFMTLWALAFCFLVVVPIPAQT). Residues 34 to 73 (TSLQNAKDDRRLQELESKIGAESDQPNANLVGPSFSRFGD) constitute a propeptide that is removed on maturation. Residues 51 to 72 (KIGAESDQPNANLVGPSFSRFG) are disordered. F82 carries the phenylalanine amide modification. The propeptide occupies 86–111 (VPLISRPMIPIELDLLMDNDDERTKA). Position 117 is a sulfotyrosine (Y117). Position 122 is a phenylalanine amide (F122). Y134 carries the sulfotyrosine modification. F139 carries the phenylalanine amide modification.

It belongs to the gastrin/cholecystokinin family.

Its subcellular location is the secreted. Its function is as follows. Drosulfakinin-0 (DSK 0) plays diverse biological roles including regulating gut muscle contraction in adults but not in larvae. The protein is Drosulfakinins of Drosophila mauritiana (Fruit fly).